A 441-amino-acid polypeptide reads, in one-letter code: Malate dehydrogenase [NADP], chloroplastic (441 aa).

A chloroplast-targeting transit peptide spans 1-51 (MAVAELSPSYKTQLKTCQQLSSSLSTRLSDHRKFSLRLLPRPVSVRGGIRC). Cys-75 and Cys-80 are disulfide-bonded. 104–110 (GAAGMIS) contributes to the NADP(+) binding site. 2 residues coordinate substrate: Arg-185 and Arg-191. An NADP(+)-binding site is contributed by Asn-198. Residue Gln-205 participates in NAD(+) binding. Residue 222–224 (VGN) coordinates NADP(+). Positions 224 and 255 each coordinate substrate. His-280 acts as the Proton acceptor in catalysis. Cysteines 416 and 428 form a disulfide.

Belongs to the LDH/MDH superfamily. MDH type 2 family. In terms of assembly, homodimer.

Its subcellular location is the plastid. The protein resides in the chloroplast. The catalysed reaction is (S)-malate + NADP(+) = oxaloacetate + NADPH + H(+). Chloroplast NADP-MDH is activated upon illumination. In order to be enzymatically active, disulfide bridges on the protein must be reduced by thioredoxin which receives electrons from ferredoxin and the electron transport system of photosynthesis. In terms of biological role, the chloroplastic, NADP-dependent form is essential for the photosynthesis C4 cycle, which allows plants to circumvent the problem of photorespiration. In C4 plants, NADP-MDH activity acts to convert oxaloacetate to malate in chloroplasts of mesophyll cells for transport to the bundle sheath cells. The protein is Malate dehydrogenase [NADP], chloroplastic (MDH1) of Mesembryanthemum crystallinum (Common ice plant).